The following is a 432-amino-acid chain: Putative D-alanyl-D-alanine carboxypeptidase (432 aa).

A helical; Signal-anchor transmembrane segment spans residues 7–25 (ATVLLTFSLSAFAVEYPVL).

It belongs to the peptidase S12 family. YfeW subfamily.

The protein localises to the cell inner membrane. The enzyme catalyses Preferential cleavage: (Ac)2-L-Lys-D-Ala-|-D-Ala. Also transpeptidation of peptidyl-alanyl moieties that are N-acyl substituents of D-alanine.. This chain is Putative D-alanyl-D-alanine carboxypeptidase, found in Salmonella typhi.